A 285-amino-acid chain; its full sequence is Nucleotide-binding protein Pfl01_0854 (285 aa).

Residue 8-15 (GRSGSGKS) coordinates ATP. 60-63 (DARN) provides a ligand contact to GTP.

Belongs to the RapZ-like family.

Displays ATPase and GTPase activities. The chain is Nucleotide-binding protein Pfl01_0854 from Pseudomonas fluorescens (strain Pf0-1).